A 778-amino-acid chain; its full sequence is Endonuclease MutS2 (778 aa).

Position 328–335 (328–335 (GPNTGGKT)) interacts with ATP. Residues 702-777 (LDLRGKRYEE…GSGATIVTFK (76 aa)) enclose the Smr domain.

The protein belongs to the DNA mismatch repair MutS family. MutS2 subfamily. Homodimer. Binds to stalled ribosomes, contacting rRNA.

Functionally, endonuclease that is involved in the suppression of homologous recombination and thus may have a key role in the control of bacterial genetic diversity. Its function is as follows. Acts as a ribosome collision sensor, splitting the ribosome into its 2 subunits. Detects stalled/collided 70S ribosomes which it binds and splits by an ATP-hydrolysis driven conformational change. Acts upstream of the ribosome quality control system (RQC), a ribosome-associated complex that mediates the extraction of incompletely synthesized nascent chains from stalled ribosomes and their subsequent degradation. Probably generates substrates for RQC. In Streptococcus pneumoniae (strain 70585), this protein is Endonuclease MutS2.